A 322-amino-acid chain; its full sequence is Myeloid-associated differentiation marker (322 aa).

The segment covering 1–18 has biased composition (low complexity); sequence MPVTVTRTTITTTTTSSS. Positions 1-21 are disordered; that stretch reads MPVTVTRTTITTTTTSSSGLG. S22 is subject to Phosphoserine. 2 MARVEL domains span residues 31-163 and 168-319; these read ALTQ…ARPG and YMAT…HLVF. 8 consecutive transmembrane segments (helical) span residues 41–61, 70–90, 101–121, 137–157, 171–191, 203–223, 239–259, and 294–314; these read LLQLVSTCVAFSLVASVGAWT, FTWCFCFSVTLIILIVELCGL, FPITFACYAALFCLSASIIYP, AIAATFFSCIACVAYATEVAW, TVPGLLKVLETFVACIIFAFI, LEWCVAVYAICFILAAIAILL, FLSGLALLSVLLYATALVLWP, and LAVAILTAINLLAYVADLVHS.

The protein belongs to the MAL family. In terms of tissue distribution, widely expressed. Not detected in thymus.

The protein localises to the membrane. This is Myeloid-associated differentiation marker (MYADM) from Homo sapiens (Human).